A 177-amino-acid chain; its full sequence is Ribosome maturation factor RimM (177 aa).

The PRC barrel domain maps to 100-177 (EDEYYWSDLV…TVLVAWPSDY (78 aa)).

This sequence belongs to the RimM family. Binds ribosomal protein uS19.

It is found in the cytoplasm. In terms of biological role, an accessory protein needed during the final step in the assembly of 30S ribosomal subunit, possibly for assembly of the head region. Essential for efficient processing of 16S rRNA. May be needed both before and after RbfA during the maturation of 16S rRNA. It has affinity for free ribosomal 30S subunits but not for 70S ribosomes. This Psychrobacter cryohalolentis (strain ATCC BAA-1226 / DSM 17306 / VKM B-2378 / K5) protein is Ribosome maturation factor RimM.